A 100-amino-acid chain; its full sequence is Aspartyl/glutamyl-tRNA(Asn/Gln) amidotransferase subunit C (100 aa).

This sequence belongs to the GatC family. As to quaternary structure, heterotrimer of A, B and C subunits.

It catalyses the reaction L-glutamyl-tRNA(Gln) + L-glutamine + ATP + H2O = L-glutaminyl-tRNA(Gln) + L-glutamate + ADP + phosphate + H(+). It carries out the reaction L-aspartyl-tRNA(Asn) + L-glutamine + ATP + H2O = L-asparaginyl-tRNA(Asn) + L-glutamate + ADP + phosphate + 2 H(+). In terms of biological role, allows the formation of correctly charged Asn-tRNA(Asn) or Gln-tRNA(Gln) through the transamidation of misacylated Asp-tRNA(Asn) or Glu-tRNA(Gln) in organisms which lack either or both of asparaginyl-tRNA or glutaminyl-tRNA synthetases. The reaction takes place in the presence of glutamine and ATP through an activated phospho-Asp-tRNA(Asn) or phospho-Glu-tRNA(Gln). This is Aspartyl/glutamyl-tRNA(Asn/Gln) amidotransferase subunit C from Dictyoglomus thermophilum (strain ATCC 35947 / DSM 3960 / H-6-12).